Here is a 298-residue protein sequence, read N- to C-terminus: Lipoyl synthase (298 aa).

[4Fe-4S] cluster contacts are provided by cysteine 40, cysteine 45, cysteine 51, cysteine 67, cysteine 71, cysteine 74, and serine 280. Residues 53-269 (AVRKTATFMI…KEIALSKGFS (217 aa)) enclose the Radical SAM core domain.

It belongs to the radical SAM superfamily. Lipoyl synthase family. The cofactor is [4Fe-4S] cluster.

It is found in the cytoplasm. It catalyses the reaction [[Fe-S] cluster scaffold protein carrying a second [4Fe-4S](2+) cluster] + N(6)-octanoyl-L-lysyl-[protein] + 2 oxidized [2Fe-2S]-[ferredoxin] + 2 S-adenosyl-L-methionine + 4 H(+) = [[Fe-S] cluster scaffold protein] + N(6)-[(R)-dihydrolipoyl]-L-lysyl-[protein] + 4 Fe(3+) + 2 hydrogen sulfide + 2 5'-deoxyadenosine + 2 L-methionine + 2 reduced [2Fe-2S]-[ferredoxin]. Its pathway is protein modification; protein lipoylation via endogenous pathway; protein N(6)-(lipoyl)lysine from octanoyl-[acyl-carrier-protein]. Catalyzes the radical-mediated insertion of two sulfur atoms into the C-6 and C-8 positions of the octanoyl moiety bound to the lipoyl domains of lipoate-dependent enzymes, thereby converting the octanoylated domains into lipoylated derivatives. This is Lipoyl synthase from Bacillus cereus (strain G9842).